The primary structure comprises 147 residues: Putative pre-16S rRNA nuclease (147 aa).

The protein belongs to the YqgF nuclease family.

It is found in the cytoplasm. Its function is as follows. Could be a nuclease involved in processing of the 5'-end of pre-16S rRNA. The sequence is that of Putative pre-16S rRNA nuclease from Ligilactobacillus salivarius (strain UCC118) (Lactobacillus salivarius).